The following is an 87-amino-acid chain: Toxin Css39.8 (87 aa).

Residues 1–19 form the signal peptide; it reads MNSLLMITACFFLIGTVWA. The LCN-type CS-alpha/beta domain occupies 20-85; sequence KEGYLVNKST…TYPLPNKSCS (66 aa). Intrachain disulfides connect Cys31-Cys84, Cys35-Cys60, Cys44-Cys65, and Cys48-Cys67.

This sequence belongs to the long (4 C-C) scorpion toxin superfamily. Sodium channel inhibitor family. Beta subfamily. Expressed by the venom gland.

The protein resides in the secreted. In terms of biological role, beta toxins bind voltage-independently at site-4 of sodium channels (Nav) and shift the voltage of activation toward more negative potentials thereby affecting sodium channel activation and promoting spontaneous and repetitive firing. This toxin is lethal to crustaceans (freshwater crayfish (Cambarellus montezumae spp.)), it provokes a reversible paralysis to insects (crickets (Achaeta spp.)), but is not toxic to mice. At high concentrations, it does displace the (beta) mammal-specific toxin Cn2 from rat brain synaptosomes. The polypeptide is Toxin Css39.8 (Centruroides suffusus (Durango bark scorpion)).